We begin with the raw amino-acid sequence, 1208 residues long: DNA-directed RNA polymerase subunit beta (1208 aa).

The protein belongs to the RNA polymerase beta chain family. As to quaternary structure, the RNAP catalytic core consists of 2 alpha, 1 beta, 1 beta' and 1 omega subunit. When a sigma factor is associated with the core the holoenzyme is formed, which can initiate transcription.

The enzyme catalyses RNA(n) + a ribonucleoside 5'-triphosphate = RNA(n+1) + diphosphate. DNA-dependent RNA polymerase catalyzes the transcription of DNA into RNA using the four ribonucleoside triphosphates as substrates. The polypeptide is DNA-directed RNA polymerase subunit beta (Enterococcus faecium (Streptococcus faecium)).